The chain runs to 648 residues: Chaperone protein HtpG (648 aa).

Residues 1 to 349 (MTTEHAAGAQ…SSDLPLNVSR (349 aa)) are a; substrate-binding. Residues 350–570 (EILQESKDID…EHDVGMNLAR (221 aa)) form a b region. Positions 571-648 (ILKAAGQQAP…MAMGGSAGTD (78 aa)) are c.

This sequence belongs to the heat shock protein 90 family. As to quaternary structure, homodimer.

It is found in the cytoplasm. Its function is as follows. Molecular chaperone. Has ATPase activity. The polypeptide is Chaperone protein HtpG (Aromatoleum aromaticum (strain DSM 19018 / LMG 30748 / EbN1) (Azoarcus sp. (strain EbN1))).